Reading from the N-terminus, the 286-residue chain is Alpha-ketoglutarate-dependent dioxygenase alkB homolog 3 (286 aa).

The tract at residues 1–46 (MEDKRQRARVQGGWATPTKSQSATQPASPARSRLSQTAGPAWRSKE) is disordered. Positions 17-38 (PTKSQSATQPASPARSRLSQTA) are enriched in polar residues. Substrate is bound by residues W115 and 141–143 (YTY). Positions 172 to 278 (TFNSLLCNFY…RVNLTFRTVY (107 aa)) constitute a Fe2OG dioxygenase domain. Position 177 is a (4R)-5-hydroxyleucine; alternate (L177). A (4R)-5-oxoleucine; alternate modification is found at L177. 179 to 181 (NFY) provides a ligand contact to 2-oxoglutarate. 2 residues coordinate Fe cation: H191 and D193. Residue D194 participates in substrate binding. H257 contributes to the Fe cation binding site. 2-oxoglutarate is bound by residues 269–275 (RVNLTFR) and R275.

The protein belongs to the alkB family. As to quaternary structure, interacts with the ASCC complex composed of ASCC1, ASCC2 and ASCC3. Interacts directly with ASCC3, and is thereby recruited to the ASCC complex. Interacts with OTUD4; the interaction is direct. Interacts with USP7 and USP9X. The cofactor is Fe(2+). Ubiquitinated; undergoes 'Lys-48'-linked polyubiquitination. OTUD4 promotes USP7 and USP9X-dependent deubiquitination of 'Lys-48'-polyubiquitinated ALKBH3 promoting the repair of alkylated DNA lesions. In terms of tissue distribution, detected in testis, kidney, liver and heart.

It is found in the nucleus. The protein localises to the cytoplasm. It carries out the reaction an N(1)-methyladenosine in mRNA + 2-oxoglutarate + O2 = an adenosine in mRNA + formaldehyde + succinate + CO2. The enzyme catalyses a methylated nucleobase within DNA + 2-oxoglutarate + O2 = a nucleobase within DNA + formaldehyde + succinate + CO2. It catalyses the reaction an N(1)-methyl-2'-deoxyadenosine in single-stranded DNA + 2-oxoglutarate + O2 = a 2'-deoxyadenosine in single-stranded DNA + formaldehyde + succinate + CO2 + H(+). The catalysed reaction is an N(3)-methyl-2'-deoxycytidine in single-stranded DNA + 2-oxoglutarate + O2 = a 2'-deoxycytidine in single-stranded DNA + formaldehyde + succinate + CO2 + H(+). It carries out the reaction a 3,N(4)-etheno-2'-deoxycytidine in single-stranded DNA + 2-oxoglutarate + O2 + H2O = a 2'-deoxycytidine in single-stranded DNA + glyoxal + succinate + CO2. With respect to regulation, activated by ascorbate. Dioxygenase that mediates demethylation of DNA and RNA containing 1-methyladenosine (m1A). Repairs alkylated DNA containing 1-methyladenosine (m1A) and 3-methylcytosine (m3C) by oxidative demethylation. Has a strong preference for single-stranded DNA. Able to process alkylated m3C within double-stranded regions via its interaction with ASCC3, which promotes DNA unwinding to generate single-stranded substrate needed for ALKBH3. Can repair exocyclic 3,N4-ethenocytosine adducs in single-stranded DNA. Also acts on RNA. Demethylates N(1)-methyladenosine (m1A) RNA, an epigenetic internal modification of messenger RNAs (mRNAs) highly enriched within 5'-untranslated regions (UTRs) and in the vicinity of start codons. Requires molecular oxygen, alpha-ketoglutarate and iron. This Mus musculus (Mouse) protein is Alpha-ketoglutarate-dependent dioxygenase alkB homolog 3.